The sequence spans 291 residues: 33 kDa chaperonin (291 aa).

2 disulfide bridges follow: Cys-237–Cys-239 and Cys-270–Cys-273.

Belongs to the HSP33 family. Post-translationally, under oxidizing conditions two disulfide bonds are formed involving the reactive cysteines. Under reducing conditions zinc is bound to the reactive cysteines and the protein is inactive.

It is found in the cytoplasm. In terms of biological role, redox regulated molecular chaperone. Protects both thermally unfolding and oxidatively damaged proteins from irreversible aggregation. Plays an important role in the bacterial defense system toward oxidative stress. This chain is 33 kDa chaperonin, found in Bacillus cereus (strain G9842).